The chain runs to 694 residues: Methionine--tRNA ligase (694 aa).

Positions Pro14–His24 match the 'HIGH' region motif. Cys145, Cys148, Cys158, and Cys161 together coordinate Zn(2+). The short motif at Lys330–Ser334 is the 'KMSKS' region element. Residue Lys333 participates in ATP binding. Residues Ser558–Gln579 form a disordered region. The tRNA-binding domain maps to Asp593–Lys694.

The protein belongs to the class-I aminoacyl-tRNA synthetase family. MetG type 1 subfamily. In terms of assembly, homodimer. It depends on Zn(2+) as a cofactor.

Its subcellular location is the cytoplasm. It catalyses the reaction tRNA(Met) + L-methionine + ATP = L-methionyl-tRNA(Met) + AMP + diphosphate. In terms of biological role, is required not only for elongation of protein synthesis but also for the initiation of all mRNA translation through initiator tRNA(fMet) aminoacylation. The protein is Methionine--tRNA ligase of Methylococcus capsulatus (strain ATCC 33009 / NCIMB 11132 / Bath).